Consider the following 445-residue polypeptide: Cyclic GMP-AMP phosphodiesterase SMPDL3A (445 aa).

The signal sequence occupies residues 1–22 (MALPGNFLCCLLVAWLCDPGLG). Positions 42 and 44 each coordinate Zn(2+). A disulfide bond links C59 and C78. N-linked (GlcNAc...) asparagine glycosylation occurs at N66. D107 contacts Zn(2+). H111 is an ATP binding site. N128 is a glycosylation site (N-linked (GlcNAc...) asparagine). N148 provides a ligand contact to Zn(2+). ATP is bound by residues N148 and H149. N-linked (GlcNAc...) asparagine glycans are attached at residues N219 and N235. Positions 249, 290, and 292 each coordinate Zn(2+). 2 N-linked (GlcNAc...) asparagine glycosylation sites follow: N353 and N364. 2 disulfide bridges follow: C417/C421 and C427/C440.

This sequence belongs to the acid sphingomyelinase family. In terms of assembly, monomer. Homodimer; homodimerizes following 2',3'-cGAMP-binding. It depends on Zn(2+) as a cofactor.

It localises to the secreted. The enzyme catalyses 2',3'-cGAMP + H2O = 5'-pGpA(2'-5') + H(+). The catalysed reaction is 5'-pGpA(2'-5') + H2O = 5'-GpA(2'-5') + phosphate. It carries out the reaction a ribonucleoside 5'-triphosphate + H2O = a ribonucleoside 5'-diphosphate + phosphate + H(+). It catalyses the reaction ATP + H2O = ADP + phosphate + H(+). Its function is as follows. Cyclic-nucleotide phosphodiesterase that acts as a negative regulator of innate immunity by mediating degradation of 2',3'-cGAMP, thereby inhibiting the cGAS-STING signaling. Specifically linearizes 2',3'-cGAMP into 2'5'-bond pGpA and further hydrolyzes pGpA to produce GpA. Also has in vitro nucleotide phosphodiesterase activity with nucleoside triphosphates, such as ATP. Has in vitro activity with p-nitrophenyl-TMP. Has lower activity with nucleoside diphosphates, and no activity with nucleoside monophosphates. Has in vitro activity with CDP-choline, giving rise to CMP and phosphocholine. Has in vitro activity with CDP-ethanolamine. Does not have sphingomyelin phosphodiesterase activity. This chain is Cyclic GMP-AMP phosphodiesterase SMPDL3A (Smpdl3a), found in Rattus norvegicus (Rat).